We begin with the raw amino-acid sequence, 214 residues long: Thymidylate kinase (214 aa).

11–18 (GPEGAGKT) is an ATP binding site.

This sequence belongs to the thymidylate kinase family.

It catalyses the reaction dTMP + ATP = dTDP + ADP. Phosphorylation of dTMP to form dTDP in both de novo and salvage pathways of dTTP synthesis. The polypeptide is Thymidylate kinase (Leuconostoc citreum (strain KM20)).